The chain runs to 159 residues: 3-dehydroquinate dehydratase (159 aa).

The active-site Proton acceptor is tyrosine 22. Substrate contacts are provided by asparagine 73, histidine 79, and aspartate 86. Histidine 99 functions as the Proton donor in the catalytic mechanism. Substrate contacts are provided by residues 100–101 and arginine 110; that span reads IS.

This sequence belongs to the type-II 3-dehydroquinase family. In terms of assembly, homododecamer.

The enzyme catalyses 3-dehydroquinate = 3-dehydroshikimate + H2O. Its pathway is metabolic intermediate biosynthesis; chorismate biosynthesis; chorismate from D-erythrose 4-phosphate and phosphoenolpyruvate: step 3/7. Functionally, catalyzes a trans-dehydration via an enolate intermediate. This Campylobacter jejuni subsp. doylei (strain ATCC BAA-1458 / RM4099 / 269.97) protein is 3-dehydroquinate dehydratase.